We begin with the raw amino-acid sequence, 243 residues long: MAKVEQVLSLEPQHELKFRGPFTDVVTTNLKLGNPTDRNVCFKVKTTAPRRYCVRPNSGIIDAGASINVSVMLQPFDYDPNEKSKHKFMVQSMFAPTDTSDMEAVWKEAKPEDLMDSKLRCVFELPAENDKPHDVEINKIIPTTASKTETPTVSKALSSSLDDTEVKKVMEECKRLQSEVQRLREENKQFKEEDGLRMRKTAQSNSPAPASAMAGKEEGLSTRLLALVVLFFIVGVIIGKIAL.

A2 bears the N-acetylalanine mark. At 2–218 the chain is on the cytoplasmic side; sequence AKVEQVLSLE…PASAMAGKEE (217 aa). An MSP domain is found at 7-124; that stretch reads VLSLEPQHEL…MDSKLRCVFE (118 aa). A Phosphoserine modification is found at S146. K147 participates in a covalent cross-link: Glycyl lysine isopeptide (Lys-Gly) (interchain with G-Cter in SUMO1). T150 carries the phosphothreonine modification. Phosphoserine occurs at positions 158, 159, and 160. Positions 161–196 form a coiled coil; that stretch reads LDDTEVKKVMEECKRLQSEVQRLREENKQFKEEDGL. Residues 186 to 197 show a composition bias toward basic and acidic residues; sequence ENKQFKEEDGLR. The segment at 186 to 214 is disordered; sequence ENKQFKEEDGLRMRKTAQSNSPAPASAMA. Phosphoserine is present on S206. Residues 219–239 form a helical; Anchor for type IV membrane protein membrane-spanning segment; that stretch reads GLSTRLLALVVLFFIVGVIIG.

This sequence belongs to the VAMP-associated protein (VAP) (TC 9.B.17) family. As to quaternary structure, homodimer, and heterodimer with VAPA. Interacts with VAMP1 and VAMP2. Interacts (via MSP domain) with ZFYVE27. Interacts with RMDN3. Interacts with KIF5A in a ZFYVE27-dependent manner. Interacts (via MSP domain) with STARD3 (via phospho-FFAT motif). Interacts with STARD3NL (via FFAT motif). Interacts with CERT1. Interacts with PLEKHA3 and SACM1L to form a ternary complex. Interacts with VPS13A (via FFAT motif). Interacts with RB1CC1 (via phosphorylated FFAT motif), MIGA2 (via phosphorylated FFAT motif), RMDN3 (via phosphorylated FFAT motif), OSBPL1A (via FFAT motif), KCNB1 (via phosphorylated FFAT motif) and KCNB2 (via phosphorylated FFAT motif). Interacts (via MSP domain) with WDR44 (via FFAT motif); the interactions connect the endoplasmic reticulum (ER) with the endosomal tubule.

It is found in the endoplasmic reticulum membrane. Functionally, endoplasmic reticulum (ER)-anchored protein that mediates the formation of contact sites between the ER and endosomes via interaction with FFAT motif-containing proteins such as STARD3 or WDR44. Interacts with STARD3 in a FFAT motif phosphorylation dependent manner. Via interaction with WDR44 participates in neosynthesized protein export. Participates in the endoplasmic reticulum unfolded protein response (UPR) by inducing ERN1/IRE1 activity. Involved in cellular calcium homeostasis regulation. The polypeptide is Vesicle-associated membrane protein-associated protein B (Bos taurus (Bovine)).